Consider the following 1668-residue polypeptide: Zinc finger CCCH domain-containing protein 13 (1668 aa).

Disordered regions lie at residues 1 to 38 (MSKIRRKVTVENTKTISDSTSRRPSVFERLGPSTGSTA) and 56 to 157 (TCRF…GDIN). The segment covering 10-23 (VENTKTISDSTSRR) has biased composition (polar residues). The C3H1-type zinc-finger motif lies at 36–64 (STAETQCRNWLKTGNCLYGNTCRFVHGPS). A phosphoserine mark is found at Ser64 and Ser77. The span at 76–136 (RSPERPTGDL…IKITKERTPE (61 aa)) shows a compositional bias: basic and acidic residues. Glycyl lysine isopeptide (Lys-Gly) (interchain with G-Cter in SUMO2) cross-links involve residues Lys179 and Lys194. 2 disordered regions span residues 190–1112 (EIII…TATA) and 1125–1466 (AAAT…PISD). A phosphoserine mark is found at Ser198, Ser207, Ser209, and Ser211. Residues 204 to 213 (SKLSPSPSLR) show a composition bias toward low complexity. Over residues 214–224 (KSSKSPKRKSS) the composition is skewed to basic residues. At Thr237 the chain carries Phosphothreonine. Phosphoserine is present on residues Ser238 and Ser242. Over residues 239–254 (AVSSPLLDQQRNSKTN) the composition is skewed to polar residues. Position 263 is a phosphothreonine (Thr263). Position 265 is a phosphoserine (Ser265). Residues 283 to 315 (KYKVKDRIEEKTRDGKDRGRDFERQREKRDKPR) are compositionally biased toward basic and acidic residues. Phosphoserine occurs at positions 316, 318, 325, and 328. The segment covering 323 to 346 (HHSPISSRHHSSSSQSGSSIQRHS) has biased composition (low complexity). A phosphothreonine mark is found at Thr354 and Thr364. Residues Ser370, Ser372, and Ser381 each carry the phosphoserine modification. The segment covering 370–382 (SASPYPSHSLSSP) has biased composition (low complexity). Composition is skewed to basic and acidic residues over residues 394–434 (PMRE…REER) and 442–575 (SSRD…EKGS). Residues 584-593 (DSHSSNSNYH) are compositionally biased toward low complexity. The span at 594 to 640 (DSWETRSSYPERDRYPERDNRDQARDSSFERRHGERDRRDNRERDQR) shows a compositional bias: basic and acidic residues. Ser643 carries the phosphoserine modification. Residues 645–789 (IRHQGRNDEL…RDKERERQRD (145 aa)) are a coiled coil. The segment covering 649-821 (GRNDELERDE…NPRDGHDERK (173 aa)) has biased composition (basic and acidic residues). Phosphoserine is present on residues Ser831, Ser833, Ser837, Ser845, Ser848, Ser853, Ser873, Ser875, and Ser877. The segment covering 881–957 (LTEDRQGRWK…TSDRAHDENK (77 aa)) has biased composition (basic and acidic residues). At Thr882 the chain carries Phosphothreonine. Ser943 is modified (phosphoserine). Basic residues predominate over residues 958–969 (KKAKIQKKPIKK). Over residues 970-981 (KKEDDVGIERGN) the composition is skewed to basic and acidic residues. Residues Ser986, Ser993, Ser1010, Ser1014, and Ser1017 each carry the phosphoserine modification. Residues 996–1010 (KGQKKKSIEKKRKKS) show a composition bias toward basic residues. Thr1033 bears the Phosphothreonine mark. Residues 1073-1083 (PDRTEVTEAEH) show a composition bias toward basic and acidic residues. 2 stretches are compositionally biased toward low complexity: residues 1084–1100 (TATATTPGSTPSPLSSL) and 1125–1153 (AAATSFSTSAITISTSATPTNTTNNTFAN). Positions 1163-1188 (TRVEKVETPHVTIEDAQHRKPMDQKR) are enriched in basic and acidic residues. Thr1170 carries the post-translational modification Phosphothreonine. 4 positions are modified to phosphoserine: Ser1191, Ser1194, Ser1208, and Ser1210. Over residues 1213-1223 (SAHRSGDDQSG) the composition is skewed to basic and acidic residues. Ser1230 is subject to Phosphoserine. Composition is skewed to basic and acidic residues over residues 1231 to 1286 (GSRD…DRQV) and 1294 to 1379 (DSRD…DRTF). Residues 1300–1366 (QERDRYEHDR…RERERLISDS (67 aa)) are a coiled coil. Ser1364, Ser1366, Ser1382, Ser1386, Ser1406, Ser1409, Ser1438, Leu1453, Gly1456, Ser1465, and Asp1466 each carry phosphoserine. Composition is skewed to basic and acidic residues over residues 1386–1421 (SVKRCEAKLEGEHERDLESTSRDSLALDKERMDKDL) and 1429–1438 (ETNKSERTES).

The protein belongs to the ZC3H13 family. Component of the WMM complex, a N6-methyltransferase complex composed of a catalytic subcomplex, named MAC, and of an associated subcomplex, named MACOM. The MAC subcomplex is composed of METTL3 and METTL14. The MACOM subcomplex is composed of WTAP, ZC3H13, CBLL1/HAKAI, VIRMA, and, in some cases of RBM15 (RBM15 or RBM15B). Also a component of a MACOM-like complex, named WTAP complex, composed of WTAP, ZC3H13, CBLL1/HAKAI, VIRMA, RBM15, BCLAF1 and THRAP3.

The protein localises to the nucleus speckle. It is found in the nucleus. The protein resides in the nucleoplasm. Associated component of the WMM complex, a complex that mediates N6-methyladenosine (m6A) methylation of RNAs, a modification that plays a role in the efficiency of mRNA splicing and RNA processing. Acts as a key regulator of m6A methylation by promoting m6A methylation of mRNAs at the 3'-UTR. Controls embryonic stem cells (ESCs) pluripotency via its role in m6A methylation. In the WMM complex, anchors component of the MACOM subcomplex in the nucleus. Also required for bridging WTAP to the RNA-binding component RBM15 (RBM15 or RBM15B). The chain is Zinc finger CCCH domain-containing protein 13 from Homo sapiens (Human).